The following is a 435-amino-acid chain: Adenylosuccinate synthetase (435 aa).

GTP-binding positions include 11 to 17 and 39 to 41; these read GDEGKGK and GHT. Catalysis depends on D12, which acts as the Proton acceptor. Mg(2+) contacts are provided by D12 and G39. IMP-binding positions include 12–15, 37–40, T128, R142, Q223, T238, and R302; these read DEGK and NAGH. H40 acts as the Proton donor in catalysis. 298-304 is a substrate binding site; sequence SVTGRPR. GTP is bound by residues R304, 330 to 332, and 412 to 414; these read KLD and STG.

Belongs to the adenylosuccinate synthetase family. In terms of assembly, homodimer. Mg(2+) is required as a cofactor.

It localises to the cytoplasm. It catalyses the reaction IMP + L-aspartate + GTP = N(6)-(1,2-dicarboxyethyl)-AMP + GDP + phosphate + 2 H(+). Its pathway is purine metabolism; AMP biosynthesis via de novo pathway; AMP from IMP: step 1/2. In terms of biological role, plays an important role in the de novo pathway of purine nucleotide biosynthesis. Catalyzes the first committed step in the biosynthesis of AMP from IMP. The polypeptide is Adenylosuccinate synthetase (Coxiella burnetii (strain Dugway 5J108-111)).